The following is a 507-amino-acid chain: Maturase K (507 aa).

Belongs to the intron maturase 2 family. MatK subfamily.

Its subcellular location is the plastid. It localises to the chloroplast. Usually encoded in the trnK tRNA gene intron. Probably assists in splicing its own and other chloroplast group II introns. The protein is Maturase K of Euryale ferox (Gorgon plant).